Here is a 428-residue protein sequence, read N- to C-terminus: 3-phosphoshikimate 1-carboxyvinyltransferase (428 aa).

3-phosphoshikimate is bound by residues Lys-19, Ser-20, and Arg-24. Residue Lys-19 coordinates phosphoenolpyruvate. Residues Gly-91 and Arg-119 each contribute to the phosphoenolpyruvate site. Ser-164, Gln-166, Asp-312, and Lys-339 together coordinate 3-phosphoshikimate. Residue Gln-166 participates in phosphoenolpyruvate binding. Asp-312 (proton acceptor) is an active-site residue. The phosphoenolpyruvate site is built by Arg-343 and Arg-386.

The protein belongs to the EPSP synthase family. Monomer.

It is found in the cytoplasm. It catalyses the reaction 3-phosphoshikimate + phosphoenolpyruvate = 5-O-(1-carboxyvinyl)-3-phosphoshikimate + phosphate. It participates in metabolic intermediate biosynthesis; chorismate biosynthesis; chorismate from D-erythrose 4-phosphate and phosphoenolpyruvate: step 6/7. Its function is as follows. Catalyzes the transfer of the enolpyruvyl moiety of phosphoenolpyruvate (PEP) to the 5-hydroxyl of shikimate-3-phosphate (S3P) to produce enolpyruvyl shikimate-3-phosphate and inorganic phosphate. This is 3-phosphoshikimate 1-carboxyvinyltransferase from Bacillus subtilis (strain 168).